The chain runs to 1910 residues: C2 domain-containing protein (1910 aa).

Residues 1-28 show a composition bias toward basic and acidic residues; it reads MMKLKEMVEAAEAKVESKPPQAAEEKAP. 3 disordered regions span residues 1–54, 355–377, and 398–428; these read MMKL…EPLD, AMKL…PEDG, and LEEL…DGPQ. The segment covering 414–423 has biased composition (basic and acidic residues); it reads KGEDKKDGNK. In terms of domain architecture, C2 spans 557–678; it reads QLGEVSESDS…FFNEKHNKRN (122 aa). Basic and acidic residues-rich tracts occupy residues 1192–1205 and 1215–1228; these read LAQK…DAQR and GHEG…DKQG. Disordered stretches follow at residues 1192 to 1267, 1405 to 1424, 1431 to 1654, 1666 to 1747, 1822 to 1841, and 1879 to 1910; these read LAQK…VKKG, ATAG…RDMQ, LEEA…SMGA, QRKH…FLSS, AKEE…DWSD, and DACS…AGRT. Composition is skewed to low complexity over residues 1239–1257 and 1405–1414; these read AAAA…VQGA and ATAGEGEQQT. A compositionally biased stretch (basic residues) spans 1440 to 1469; sequence KKKKKKEKKEKKEKKEKKEKKEKKEKKKKK. Positions 1492–1502 are enriched in low complexity; it reads PAAAIPSVLLP. Positions 1517 to 1526 are enriched in basic residues; the sequence is KKEKKEKKKK. Residues 1550–1561 are compositionally biased toward low complexity; the sequence is PAAAIPSILLPA. A compositionally biased stretch (basic and acidic residues) spans 1569–1584; the sequence is EKPKEKKTEKKKEKHT. Polar residues predominate over residues 1595–1604; it reads LPESETTAVV. 2 stretches are compositionally biased toward low complexity: residues 1620-1629 and 1675-1698; these read VPSSIASSEA and SSSS…SSSS. The segment covering 1701–1711 has biased composition (basic and acidic residues); the sequence is AETRAKADALR. Composition is skewed to low complexity over residues 1712–1722 and 1729–1747; these read ARLQAAQARLA and VSSS…FLSS. A coiled-coil region spans residues 1766-1828; the sequence is QQRLQKMVSG…TRRAKEEKDL (63 aa). Over residues 1890-1904 the composition is skewed to polar residues; it reads ESRTTAGAKLRQQQL.

The protein resides in the membrane. In terms of biological role, regulates microneme secretion. Probably involved in regulation of rhoptry and dense granule secretion. This is C2 domain-containing protein from Toxoplasma gondii.